The primary structure comprises 206 residues: MENVRREATRPSVPSGTLELYFPDHLYRNDYVSLEGPRWAPAIKQAVRWKFTPMGRDAAGQVWFTGLTNSEPGDAWYKLPRALDTPYREAHTRWHGCFQSRQRGLPPAYTQHLREMAFWDPAITAQYLNSGPRWGCMQWRDRQIRGKEFVVTRNQFGAKLPWRSDYVPLLSLPQRPRFTAQDFRQRGLQRPCPAIGQPPPAFTPAL.

Microtubule inner protein component of sperm flagellar doublet microtubules.

It localises to the cytoplasm. Its subcellular location is the cytoskeleton. It is found in the cilium axoneme. The protein localises to the flagellum axoneme. Its function is as follows. Microtubule inner protein (MIP) part of the dynein-decorated doublet microtubules (DMTs) in cilia axoneme, which is required for motile cilia beating. Located at the center of the tektin bundle where may function to recruit tektins or stabilize the bundle. The protein is Tektin bundle-interacting protein 1 of Mus musculus (Mouse).